The chain runs to 443 residues: Threonine/serine transporter TdcC (443 aa).

Transmembrane regions (helical) follow at residues 22-42, 44-64, 97-117, 140-160, 163-183, 207-227, 259-279, 319-339, 366-386, 389-409, and 423-443; these read TTWT…FFPI, AGFG…PIAF, GVVI…IYGV, FVAL…KDLM, VMSY…LSLI, ILVT…FSPI, ASML…FTLS, ASII…LGTL, ISMI…PNIL, IEAM…MYAI, and DNVF…YKLF.

It belongs to the amino acid/polyamine transporter 2 family. SdaC/TdcC subfamily.

It localises to the cell inner membrane. The enzyme catalyses L-threonine(in) + H(+)(in) = L-threonine(out) + H(+)(out). It catalyses the reaction L-serine(in) + H(+)(in) = L-serine(out) + H(+)(out). In terms of biological role, involved in the import of threonine and serine into the cell, with the concomitant import of a proton (symport system). This Salmonella paratyphi A (strain ATCC 9150 / SARB42) protein is Threonine/serine transporter TdcC.